A 400-amino-acid chain; its full sequence is Homoserine O-acetyltransferase (400 aa).

The interval 1–22 (MMNVHPVKGPVATGGERPHEAD) is disordered. One can recognise an AB hydrolase-1 domain in the interval 64–374 (NAILVCHALT…DKGHDAFLLD (311 aa)). Ser169 (nucleophile) is an active-site residue. Arg239 contributes to the substrate binding site. Active-site residues include Asp335 and His368. Substrate is bound at residue Asp369.

It belongs to the AB hydrolase superfamily. MetX family. As to quaternary structure, homodimer.

It is found in the cytoplasm. The enzyme catalyses L-homoserine + acetyl-CoA = O-acetyl-L-homoserine + CoA. Its pathway is amino-acid biosynthesis; L-methionine biosynthesis via de novo pathway; O-acetyl-L-homoserine from L-homoserine: step 1/1. In terms of biological role, transfers an acetyl group from acetyl-CoA to L-homoserine, forming acetyl-L-homoserine. The protein is Homoserine O-acetyltransferase of Rhodopseudomonas palustris (strain HaA2).